A 385-amino-acid polypeptide reads, in one-letter code: Cyclin-A3-2 (385 aa).

The disordered stretch occupies residues 1-110; that stretch reads MADKENSTPA…STSTASPSSG (110 aa). Low complexity-rich tracts occupy residues 7–41, 74–88, and 96–110; these read STPA…GAPP, PSSK…AAAP, and PVSS…PSSG.

This sequence belongs to the cyclin family. Cyclin AB subfamily.

This is Cyclin-A3-2 (CYCA3-2) from Oryza sativa subsp. japonica (Rice).